The chain runs to 560 residues: SWI/SNF complex subunit SWI3A homolog (560 aa).

Positions 1 to 13 (MSPPVAGAASSGD) are enriched in low complexity. The disordered stretch occupies residues 1–22 (MSPPVAGAASSGDGPPGRPPRE). Residues 24-127 (YTIPASSGWF…FSASPSRPEA (104 aa)) form the SWIRM domain. An SANT domain is found at 242 to 293 (HSSSAWTDAETLLLLEGVLKHGDDWDLIAQHVRTKNKSECIARLIQLPFGEH). The segment covering 311–330 (TTDGKVNKSTVKESSSQPTE) has biased composition (polar residues). Disordered regions lie at residues 311-352 (TTDG…EEHP) and 414-445 (QTRAFSSNHARQSDDVGGGDRDVEMHGHPDKK). Residues 331–342 (TVDDMQIDGNED) are compositionally biased toward acidic residues. Composition is skewed to basic and acidic residues over residues 343 to 352 (GADKSVEEHP) and 424 to 445 (RQSDDVGGGDRDVEMHGHPDKK).

In terms of assembly, interacts with LFR.

It is found in the nucleus. Component of a multiprotein complex equivalent of the SWI/SNF complex, an ATP-dependent chromatin-remodeling complex, which is required for the positive and negative regulation of gene expression of a large number of genes. It changes chromatin structure by altering DNA-histone contacts within a nucleosome, leading eventually to a change in nucleosome position, thus facilitating or repressing binding of gene-specific transcription factors. In Oryza sativa subsp. japonica (Rice), this protein is SWI/SNF complex subunit SWI3A homolog.